We begin with the raw amino-acid sequence, 192 residues long: Imidazole glycerol phosphate synthase subunit HisH (192 aa).

The region spanning 1 to 192 (MIAIIDYGLG…QALKGGFIND (192 aa)) is the Glutamine amidotransferase type-1 domain. Residue Cys77 is the Nucleophile of the active site. Residues His169 and Glu171 contribute to the active site.

As to quaternary structure, heterodimer of HisH and HisF.

It is found in the cytoplasm. The catalysed reaction is 5-[(5-phospho-1-deoxy-D-ribulos-1-ylimino)methylamino]-1-(5-phospho-beta-D-ribosyl)imidazole-4-carboxamide + L-glutamine = D-erythro-1-(imidazol-4-yl)glycerol 3-phosphate + 5-amino-1-(5-phospho-beta-D-ribosyl)imidazole-4-carboxamide + L-glutamate + H(+). It catalyses the reaction L-glutamine + H2O = L-glutamate + NH4(+). The protein operates within amino-acid biosynthesis; L-histidine biosynthesis; L-histidine from 5-phospho-alpha-D-ribose 1-diphosphate: step 5/9. In terms of biological role, IGPS catalyzes the conversion of PRFAR and glutamine to IGP, AICAR and glutamate. The HisH subunit catalyzes the hydrolysis of glutamine to glutamate and ammonia as part of the synthesis of IGP and AICAR. The resulting ammonia molecule is channeled to the active site of HisF. This Staphylococcus epidermidis (strain ATCC 12228 / FDA PCI 1200) protein is Imidazole glycerol phosphate synthase subunit HisH.